Reading from the N-terminus, the 153-residue chain is SsrA-binding protein (153 aa).

This sequence belongs to the SmpB family.

The protein localises to the cytoplasm. Functionally, required for rescue of stalled ribosomes mediated by trans-translation. Binds to transfer-messenger RNA (tmRNA), required for stable association of tmRNA with ribosomes. tmRNA and SmpB together mimic tRNA shape, replacing the anticodon stem-loop with SmpB. tmRNA is encoded by the ssrA gene; the 2 termini fold to resemble tRNA(Ala) and it encodes a 'tag peptide', a short internal open reading frame. During trans-translation Ala-aminoacylated tmRNA acts like a tRNA, entering the A-site of stalled ribosomes, displacing the stalled mRNA. The ribosome then switches to translate the ORF on the tmRNA; the nascent peptide is terminated with the 'tag peptide' encoded by the tmRNA and targeted for degradation. The ribosome is freed to recommence translation, which seems to be the essential function of trans-translation. This is SsrA-binding protein from Lactobacillus delbrueckii subsp. bulgaricus (strain ATCC 11842 / DSM 20081 / BCRC 10696 / JCM 1002 / NBRC 13953 / NCIMB 11778 / NCTC 12712 / WDCM 00102 / Lb 14).